Here is a 386-residue protein sequence, read N- to C-terminus: Heat-inducible transcription repressor HrcA (386 aa).

Belongs to the HrcA family.

Functionally, negative regulator of class I heat shock genes (grpE-dnaK-dnaJ and groELS operons). Prevents heat-shock induction of these operons. The polypeptide is Heat-inducible transcription repressor HrcA (Chlamydia abortus (strain DSM 27085 / S26/3) (Chlamydophila abortus)).